We begin with the raw amino-acid sequence, 240 residues long: LexA repressor (240 aa).

A DNA-binding region (H-T-H motif) is located at residues 26-46; sequence FDEMKEALDLASKSGIHRLIT. Residues Ser161 and Lys199 each act as for autocatalytic cleavage activity in the active site.

Belongs to the peptidase S24 family. As to quaternary structure, homodimer.

The catalysed reaction is Hydrolysis of Ala-|-Gly bond in repressor LexA.. Represses a number of genes involved in the response to DNA damage (SOS response), including recA and lexA. In the presence of single-stranded DNA, RecA interacts with LexA causing an autocatalytic cleavage which disrupts the DNA-binding part of LexA, leading to derepression of the SOS regulon and eventually DNA repair. The sequence is that of LexA repressor from Brucella melitensis biotype 1 (strain ATCC 23456 / CCUG 17765 / NCTC 10094 / 16M).